A 224-amino-acid polypeptide reads, in one-letter code: Ribonuclease 3 (224 aa).

An RNase III domain is found at 5 to 127; the sequence is LERLCRRLNY…ILAAIYLDGG (123 aa). Glutamate 40 is a binding site for Mg(2+). Aspartate 44 is an active-site residue. Mg(2+)-binding residues include aspartate 113 and glutamate 116. Residue glutamate 116 is part of the active site. In terms of domain architecture, DRBM spans 154–224; sequence DAKTQLQEFL…AKAMLEQLQG (71 aa).

The protein belongs to the ribonuclease III family. As to quaternary structure, homodimer. It depends on Mg(2+) as a cofactor.

It is found in the cytoplasm. The enzyme catalyses Endonucleolytic cleavage to 5'-phosphomonoester.. Digests double-stranded RNA. Involved in the processing of primary rRNA transcript to yield the immediate precursors to the large and small rRNAs (23S and 16S). Processes some mRNAs, and tRNAs when they are encoded in the rRNA operon. Processes pre-crRNA and tracrRNA of type II CRISPR loci if present in the organism. The protein is Ribonuclease 3 of Legionella pneumophila subsp. pneumophila (strain Philadelphia 1 / ATCC 33152 / DSM 7513).